The chain runs to 2224 residues: MSNGYRTLSQHLNDLKKENFSLKLRIYFLEERMQQKYEVSREDVYKRNIELKVEVESLKRELQDRKQHLDKTWADAEDLNSQNEAELRRQVEERQQETEHVYELLGNKIQLLQEEPRLAKNEATEMETLVEAEKRCNLELSERWTNAAKNREDAAGDQEKPDQYSEALAQRDRRIEELRQSLAAQEGLVEQLSQEKRQLLHLLEEPASMEVQPVPKGLPTQQKPDLHETPTTQPPVSESHLAELQDKIQQTEATNKILQEKLNDLSCELKSAQESSQKQDTTIQSLKEMLKSRESETEELYQVIEGQNDTMAKLREMLHQSQLGQLHSSEGIAPAQQQVALLDLQSALFCSQLEIQRLQRLVRQKERQLADGKRCVQLVEAAAQEREHQKEAAWKHNQELRKALQHLQGELHSKSQQLHVLEAEKYNEIRTQGQNIQHLSHSLSHKEQLIQELQELLQYRDNADKTLDTNEVFLEKLRQRIQDRAVALERVIDEKFSALEEKDKELRQLRLAVRDRDHDLERLRCVLSANEATMQSMESLLRARGLEVEQLTATCQNLQWLKEELETKFGHWQKEQESIIQQLQTSLHDRNKEVEDLSATLLCKLGPGQSEVAEELCQRLQRKERMLQDLLSDRNKQAVEHEMEIQGLLQSMGTREQERQAAAEKMVQAFMERNSELQALRQYLGGKELMTSSQTFISNQPAGVTSIGPHHGEQTDQGSMQMPSRDDSTSLTAREEASIPRSTLGDSDTVAGLEKELSNAKEELELMAKKERESQMELSALQSMMAMQEEELQVQAADLESLTRNVQIKEDLIKDLQMQLVDPEDIPAMERLTQEVLLLREKVASVEPQGQEVSGNKRQQLLLMLEGLVDERSRLNEALQAERQLYSSLVKFHAQPENSERDGTLQVELEGAQVLRTRLEEVLGRSLERLSRLESLAAIGGGELESVQAQEMLHLRAEIHQHLEEKRKAEVELKELKAQIEEAGFSSVSHISRNTMLSLCLENAELKEQMGEAMSDGWEVEEDKEKGEVMLETVVAKGCLNENSLQAEFRKVQGKLKSAYNIINLLKEQLLLRSSEGNSKEMPELLVRLAREVDRMNTGLPSLGKHQHQEQENTTTARPGSRPQSLPLGAALSVDGYQLENKSQAQDSGHQPEFSLPGSTKHLRSQLAQCRQRYQDLQEKLLISEATVFAQANQLEKYRAVFSESLVKQDSKQIQVDLQDLGYETCGRSENEAEREETTSPECEEHNNLRPVVLMEGLCSEQGYLDPVLVSPPAKKPLENKPGKQEEFRAHGTPDDSSLLRKDIRDLKAQLQNANKVIQNLRSRVRSLSATSDYSSSLERPRKLRAVATLEGASPHSVTDEDEGWLSDGTGAFYPPGLQAKKDLESLIQRVSQLEAQLPKTGLEGKLAEELRCASWPGKYDSLIQDQARELSYLRQKIREGRGICYLLTQHAKDTVKSFEDLLRSNDIDYYLGQSFREQLAQGGQLTERLTSKLSTKDHKSEKEEAGLEPLALRLSRELQEKEKVIEVLQAKLDTRSLSPPSSHAVSDSHRSASTTSFLSDDIEACSDMDVASEYTHYDEKKPSPSHSAASASQGLKGESSSSPISLPTPQNPPKEASQAHPGFHFHSIPKPASLSQTPMHSALPSFVPFSPSGPPLLGCCETPMVSLAEAQQELQMLQKQLGESVSIAPPASTSTLLSNQTEASSPHYINPAQPHTPTRSTIELGRILEPGYLGSSGQWDMMRPQKGSVSGELSSGSSMYQLNSKPTGADLLEEHLGEIRNLRQRLEESICVNDRLREQLQHRLSSTARENGSTSHFYSQGLESMPQLYNENRALREENQSLQTRLSHASRGHSQEVDHLREALLSSRSQLQELEKELEQQKAERQQLSLQSELQIYESLCENPKKALKAFSLDSCHQVPGELSCLVAEIRALRGQLEQSIEVNNRLRLQLEQQMDRGAGKASLGPIAVGQSFPDKAEPANLHQGSAASPPVRDVGLNSPAMVLPNSSCSAPGSDHAIVTRTNNELSSDDSAAMKNPPKLEVDATDGPFANKHGRHVIGHVDDYDALQQQIGEGKLLIQKILSLMRSARSIPGQEAQDTEAPGNISAHELRSSAKALNHALEESTSLLNMFWRAALPNTHGPVLVGKEGQLMEKELLDLRAQVSQQEQILQNTAARLKRANQRKKSMEQFIVSHLTRTHDVLKKARTNLEMKSFRALTCTPAL.

4 coiled-coil regions span residues 41–97, 162–205, 236–318, and 350–682; these read REDV…RQQE, DQYS…LLEE, VSES…REML, and CSQL…ALRQ. Residues 206 to 236 are disordered; sequence PASMEVQPVPKGLPTQQKPDLHETPTTQPPV. Residues 219-236 are compositionally biased toward polar residues; the sequence is PTQQKPDLHETPTTQPPV. Positions 703–751 are disordered; that stretch reads GVTSIGPHHGEQTDQGSMQMPSRDDSTSLTAREEASIPRSTLGDSDTVA. A Phosphothreonine modification is found at Thr-705. A compositionally biased stretch (basic and acidic residues) spans 724-738; that stretch reads SRDDSTSLTAREEAS. Coiled coils occupy residues 745-822, 856-886, and 949-986; these read GDSD…QLVD, NKRQ…RQLY, and AQEM…AGFS. 3 disordered regions span residues 1098–1128, 1141–1161, and 1270–1298; these read TGLP…SLPL, NKSQ…GSTK, and VSPP…DDSS. A compositionally biased stretch (polar residues) spans 1112–1124; it reads ENTTTARPGSRPQ. 3 coiled-coil regions span residues 1159–1187, 1295–1331, and 1377–1401; these read STKH…SEAT, DDSS…LSAT, and GLQA…LPKT. Over residues 1276 to 1298 the composition is skewed to basic and acidic residues; the sequence is KPLENKPGKQEEFRAHGTPDDSS. The region spanning 1497-1588 is the Olduvai domain; it reads KDHKSEKEEA…DEKKPSPSHS (92 aa). Disordered regions lie at residues 1576–1637, 1736–1757, 1805–1824, and 1962–2001; these read THYD…SLSQ, SSGQ…LSSG, LSST…QGLE, and KASL…LNSP. Polar residues predominate over residues 1599-1609; sequence ESSSSPISLPT. Over residues 1748-1757 the composition is skewed to low complexity; it reads GSVSGELSSG. A coiled-coil region spans residues 1769-1958; that stretch reads GADLLEEHLG…RLQLEQQMDR (190 aa). A coiled-coil region spans residues 2148–2191; that stretch reads KEGQLMEKELLDLRAQVSQQEQILQNTAARLKRANQRKKSMEQF.

Interacts with PDE4D. Isoform 2 interacts with MAPRE1 and MAPRE3. Isoform 2 forms a pericentrosomal complex with AKAP9, CDK5RAP2 and EB1/MAPRE1; within this complex, may mediate MAPRE1-binding to CDK5RAP2. Interaction with AKAP9 stabilizes both proteins. Isoform 2 interacts (via N-terminus) with CAMSAP2; this interaction is much stronger in the presence of AKAP9. In complex with AKAP9, Isoform 2 recruits CAMSAP2 to the Golgi apparatus. Isoform 2 interacts with unglycosylated LGALS3BP; this interaction may connect the pericentrosomal complex to the gamma-tubulin ring complex (gamma-TuRC) to promote microtubule assembly and acetylation.

It is found in the cytoplasm. It localises to the cytoskeleton. Its subcellular location is the microtubule organizing center. The protein localises to the centrosome. The protein resides in the golgi apparatus. Its function is as follows. Functions as an anchor sequestering components of the cAMP-dependent pathway to Golgi and/or centrosomes. In terms of biological role, participates in microtubule dynamics, promoting microtubule assembly. Depending upon the cell context, may act at the level of the Golgi apparatus or that of the centrosome. In complex with AKAP9, recruits CAMSAP2 to the Golgi apparatus and tethers non-centrosomal minus-end microtubules to the Golgi, an important step for polarized cell movement. In complex with AKAP9, EB1/MAPRE1 and CDK5RAP2, contributes to microtubules nucleation and extension from the centrosome to the cell periphery, a crucial process for directed cell migration, mitotic spindle orientation and cell-cycle progression. The polypeptide is Myomegalin (Pde4dip) (Mus musculus (Mouse)).